Consider the following 649-residue polypeptide: Acetyl-coenzyme A synthetase (649 aa).

Residues 189–192, T311, and N335 contribute to the CoA site; that span reads RGGK. ATP is bound by residues 387-389, 411-416, D500, and R515; these read GEP and DTWWQT. Residue S523 coordinates CoA. ATP is bound at residue R526. The Mg(2+) site is built by V537, H539, and V542. CoA is bound at residue R584. K609 is modified (N6-acetyllysine).

It belongs to the ATP-dependent AMP-binding enzyme family. Requires Mg(2+) as cofactor. Acetylated. Deacetylation by the SIR2-homolog deacetylase activates the enzyme.

It catalyses the reaction acetate + ATP + CoA = acetyl-CoA + AMP + diphosphate. Functionally, catalyzes the conversion of acetate into acetyl-CoA (AcCoA), an essential intermediate at the junction of anabolic and catabolic pathways. AcsA undergoes a two-step reaction. In the first half reaction, AcsA combines acetate with ATP to form acetyl-adenylate (AcAMP) intermediate. In the second half reaction, it can then transfer the acetyl group from AcAMP to the sulfhydryl group of CoA, forming the product AcCoA. This chain is Acetyl-coenzyme A synthetase, found in Sinorhizobium medicae (strain WSM419) (Ensifer medicae).